Reading from the N-terminus, the 1248-residue chain is Bifunctional autolysin (1248 aa).

The signal sequence occupies residues 1 to 29 (MAKKFNYKLPSMVALTLVGSAVTAHQVQA). The tract at residues 103 to 134 (GDTRANQSATTNNTQPVAKSTSTTAPKTNTNV) is disordered. The segment at 191 to 767 (ASAQPRSVAA…AVAQPKTAVK (577 aa)) is N-acetylmuramoyl-L-alanine amidase. GW domains follow at residues 435–509 (TVAA…YNTA), 511–585 (SPVN…DTAK), 604–678 (TVSS…YNNA), 680–754 (SPVN…VPAA), 776–851 (TTQT…VQNL), 853–928 (KEVK…APTA), and 935–1009 (AAKD…KELI). Residues 768–1248 (AYTVTKPQTT…GKYFDIPQYK (481 aa)) are endo-beta-N-acetylglucosaminidase.

The protein in the N-terminal section; belongs to the N-acetylmuramoyl-L-alanine amidase 2 family. In the C-terminal section; belongs to the glycosyl hydrolase 73 family. Oligomer; forms a ring structure at the cell surface which is important for efficient partitioning of daughter cells after cell division. In terms of processing, undergoes proteolytic processing to generate the two extracellular lytic enzymes, probably at the septal region on the cell surface.

It localises to the secreted. It catalyses the reaction Hydrolyzes the link between N-acetylmuramoyl residues and L-amino acid residues in certain cell-wall glycopeptides.. The enzyme catalyses an N(4)-(oligosaccharide-(1-&gt;3)-[oligosaccharide-(1-&gt;6)]-beta-D-Man-(1-&gt;4)-beta-D-GlcNAc-(1-&gt;4)-alpha-D-GlcNAc)-L-asparaginyl-[protein] + H2O = an oligosaccharide-(1-&gt;3)-[oligosaccharide-(1-&gt;6)]-beta-D-Man-(1-&gt;4)-D-GlcNAc + N(4)-(N-acetyl-beta-D-glucosaminyl)-L-asparaginyl-[protein]. Endohydrolysis of the di-N-acetylchitobiosyl unit in high-mannose glycopeptides and glycoproteins containing the -[(Man)5(GlcNAc)2]-Asn structure. One N-acetyl-D-glucosamine residue remains attached to the protein; the rest of the oligosaccharide is released intact. Cleaves the peptidoglycan connecting the daughter cells at the end of the cell division cycle, resulting in the separation of the two newly divided cells. Acts as an autolysin in penicillin-induced lysis. The sequence is that of Bifunctional autolysin (atl) from Staphylococcus aureus (strain Mu50 / ATCC 700699).